Reading from the N-terminus, the 249-residue chain is uncharacterized protein (249 aa).

This sequence belongs to the HAD-like hydrolase superfamily. CbbY/CbbZ/Gph/YieH family.

This is an uncharacterized protein from Schizosaccharomyces pombe (strain 972 / ATCC 24843) (Fission yeast).